Consider the following 347-residue polypeptide: Ceramide very long chain fatty acid hydroxylase scs7 (347 aa).

At 1-156 the chain is on the cytoplasmic side; sequence MASVTSEKCV…GNFLEPLTKT (156 aa). Residues 157–177 traverse the membrane as a helical segment; the sequence is PWYMIPLIWVPCVTYGFLYAC. Position 178 (T178) is a topological domain, lumenal. A helical membrane pass occupies residues 179 to 199; the sequence is GIPFSVAITFFIIGLFTWTLV. At 200 to 238 the chain is on the cytoplasmic side; sequence EYTMHRFLFHLDEYTPDHPIFLTMHFAFHGCHHFLPADK. The Zn(2+) site is built by H204, H209, H228, H231, and H232. The chain crosses the membrane as a helical span at residues 239 to 259; it reads YRLVMPPALFLIFATPWYHFI. A topological domain (lumenal) is located at residue Q260. Residues 261-281 form a helical membrane-spanning segment; that stretch reads LVLPHYIGVAGFSGAILGYVF. At 282–347 the chain is on the cytoplasmic side; the sequence is YDLTHYFLHH…EQGKISTKAK (66 aa). 5 residues coordinate Zn(2+): H286, H290, H306, H309, and H310.

It belongs to the sterol desaturase family. SCS7 subfamily. The cofactor is Zn(2+).

The protein resides in the endoplasmic reticulum membrane. Its pathway is sphingolipid metabolism. Its function is as follows. Ceramide hydroxylase involved in the hydroxylation of sphingolipid-associated very long chain fatty acids. Postulated to hydroxylate the very long chain fatty acid of dihydroceramides and phytoceramides at C-2. The polypeptide is Ceramide very long chain fatty acid hydroxylase scs7 (Schizosaccharomyces pombe (strain 972 / ATCC 24843) (Fission yeast)).